Reading from the N-terminus, the 238-residue chain is Small ribosomal subunit protein uS2 (238 aa).

This sequence belongs to the universal ribosomal protein uS2 family.

In Actinobacillus pleuropneumoniae serotype 5b (strain L20), this protein is Small ribosomal subunit protein uS2.